The chain runs to 162 residues: Caveolin-2 (162 aa).

At 1 to 86 (MGLETEKADV…FEISKYVMYK (86 aa)) the chain is on the cytoplasmic side. Tyr19 carries the post-translational modification Phosphotyrosine; by SRC. Phosphoserine is present on residues Ser20 and Ser23. The residue at position 27 (Tyr27) is a Phosphotyrosine; by SRC. Ser36 carries the post-translational modification Phosphoserine. Positions 87–107 (FLTVFLAIPLAFIAGILFATL) form an intramembrane region, helical. Topologically, residues 108–162 (SCLHIWILMPFVKTCLMVLPSVQTIWKSVTDVIIAPLCTSVGRSFSSVSLQLSQD) are cytoplasmic.

This sequence belongs to the caveolin family. In terms of assembly, monomer or homodimer. Interacts with CAV1; the interaction forms a stable heterooligomeric complex that is required for targeting to lipid rafts and for caveolae formation. Tyrosine phosphorylated forms do not form heterooligomers with the Tyr-19-phosphorylated form existing as a monomer or dimer, and the Tyr-27-form as a monomer only. Interacts (tyrosine phosphorylated form) with the SH2 domain-containing proteins, RASA1, NCK1 and SRC. Interacts (tyrosine phosphorylated form) with INSR, the interaction (Tyr-27-phosphorylated form) is increased on insulin stimulation. Interacts (Tyr-19 phosphorylated form) with MAPK1 (phosphorylated form); the interaction, promoted by insulin, leads to nuclear location and MAPK1 activation. Interacts with STAT3; the interaction is increased on insulin-induced tyrosine phosphorylation leading to STAT activation. Phosphorylated on serine and tyrosine residues. CAV1 promotes phosphorylation on Ser-23 which then targets the complex to the plasma membrane, lipid rafts and caveolae. Phosphorylation on Ser-36 appears to modulate mitosis in endothelial cells. Phosphorylation on both Tyr-19 and Tyr-27 is required for insulin-induced 'Ser-727' phosphorylation of STAT3 and its activation. Phosphorylation on Tyr-19 is required for insulin-induced phosphorylation of MAPK1 and DNA binding of STAT3. Tyrosine phosphorylation is induced by both EGF and insulin (By. similarity).

The protein localises to the nucleus. It is found in the cytoplasm. The protein resides in the golgi apparatus membrane. Its subcellular location is the cell membrane. It localises to the membrane. The protein localises to the caveola. May act as a scaffolding protein within caveolar membranes. Interacts directly with G-protein alpha subunits and can functionally regulate their activity. Acts as an accessory protein in conjunction with CAV1 in targeting to lipid rafts and driving caveolae formation. The Ser-36 phosphorylated form has a role in modulating mitosis in endothelial cells. Positive regulator of cellular mitogenesis of the MAPK signaling pathway. Required for the insulin-stimulated nuclear translocation and activation of MAPK1 and STAT3, and the subsequent regulation of cell cycle progression. The chain is Caveolin-2 (CAV2) from Pongo abelii (Sumatran orangutan).